A 212-amino-acid polypeptide reads, in one-letter code: Imidazole glycerol phosphate synthase subunit HisH (212 aa).

One can recognise a Glutamine amidotransferase type-1 domain in the interval 4 to 210 (NIGIIDYGMG…LKWLHEKNSD (207 aa)). Cys-82 serves as the catalytic Nucleophile. Catalysis depends on residues His-185 and Glu-187.

In terms of assembly, heterodimer of HisH and HisF.

It is found in the cytoplasm. The catalysed reaction is 5-[(5-phospho-1-deoxy-D-ribulos-1-ylimino)methylamino]-1-(5-phospho-beta-D-ribosyl)imidazole-4-carboxamide + L-glutamine = D-erythro-1-(imidazol-4-yl)glycerol 3-phosphate + 5-amino-1-(5-phospho-beta-D-ribosyl)imidazole-4-carboxamide + L-glutamate + H(+). The enzyme catalyses L-glutamine + H2O = L-glutamate + NH4(+). The protein operates within amino-acid biosynthesis; L-histidine biosynthesis; L-histidine from 5-phospho-alpha-D-ribose 1-diphosphate: step 5/9. Functionally, IGPS catalyzes the conversion of PRFAR and glutamine to IGP, AICAR and glutamate. The HisH subunit catalyzes the hydrolysis of glutamine to glutamate and ammonia as part of the synthesis of IGP and AICAR. The resulting ammonia molecule is channeled to the active site of HisF. In Prochlorococcus marinus (strain MIT 9211), this protein is Imidazole glycerol phosphate synthase subunit HisH.